The primary structure comprises 122 residues: MNAPAAFESFLLLDDKKFYIEKDTKVPNAAIFTIMKEDHTLGNMLKIQLLKDPEVLFAGYKNPHPLEHKILLRIQTTNNTTPADALTTAITDLVGELSLLEHRIDAAIKKCTQSGDQERGYN.

This sequence belongs to the archaeal Rpo11/eukaryotic RPB11/RPC19 RNA polymerase subunit family. As to quaternary structure, component of the RNA polymerase II (Pol II) complex consisting of 12 subunits.

It is found in the nucleus. Functionally, DNA-dependent RNA polymerase catalyzes the transcription of DNA into RNA using the four ribonucleoside triphosphates as substrates. Component of RNA polymerase II which synthesizes mRNA precursors and many functional non-coding RNAs. Pol II is the central component of the basal RNA polymerase II transcription machinery. It is composed of mobile elements that move relative to each other. RPB11 is part of the core element with the central large cleft. The sequence is that of Probable DNA-directed RNA polymerase II subunit RPB11 (rpb-11) from Caenorhabditis elegans.